The chain runs to 327 residues: Interleukin-12 subunit beta (327 aa).

Residues 1 to 22 (MHPQQLVVSWFSLVLLTSPIVA) form the signal peptide. The region spanning 23-106 (IWELEKNVYV…LSRSLLLLHK (84 aa)) is the Ig-like C2-type domain. Cysteine 50 and cysteine 90 are oxidised to a cystine. A glycan (N-linked (GlcNAc...) asparagine) is linked at asparagine 223. The Fibronectin type-III domain maps to 238-327 (PPKNLQLRPL…WSEWASVSCS (90 aa)).

It belongs to the IL-12B family. As to quaternary structure, heterodimer with IL12A; disulfide-linked. The heterodimer is known as interleukin IL-12. Heterodimer with IL23A; disulfide-linked. The heterodimer is known as interleukin IL-23. Also secreted as a monomer. Interacts with NBR1; this interaction promotes IL-12 secretion.

The protein localises to the secreted. Functionally, cytokine that can act as a growth factor for activated T and NK cells, enhance the lytic activity of NK/lymphokine-activated killer cells, and stimulate the production of IFN-gamma by resting PBMC. Associates with IL23A to form the IL-23 interleukin, a heterodimeric cytokine which functions in innate and adaptive immunity. IL-23 may constitute with IL-17 an acute response to infection in peripheral tissues. IL-23 binds to a heterodimeric receptor complex composed of IL12RB1 and IL23R, activates the Jak-Stat signaling cascade, stimulates memory rather than naive T-cells and promotes production of pro-inflammatory cytokines. IL-23 induces autoimmune inflammation and thus may be responsible for autoimmune inflammatory diseases and may be important for tumorigenesis. The chain is Interleukin-12 subunit beta (IL12B) from Cervus elaphus (Red deer).